The sequence spans 1435 residues: MGARASVLSGGKLDKWEKIRLRPGGKKKYRLKHIVWASRELERYALNPGLLETSEGCKQIIGQLQPAIQTGTEELRSLYNTVATLYCVHKGIDVKDTKEALEKMEEEQNKSKKKAQQAAADTGNNSQVSQNYPIVQNLQGQMVHQAISPRTLNAWVKVIEEKAFSPEVIPMFSALSEGATPQDLNTMLNTVGGHQAAMQMLKETINEEAAEWDRLHPVHAGPIAPGQMREPRGSDIAGTTSTLQEQIAWMTSNPPIPVGEIYKRWIIVGLNKIVRMYSPVSILDIRQGPKEPFRDYVDRFYKTLRAEQASQDVKNWMTETLLVQNANPDCKTILKALGPQATLEEMMTACQGVGGPSHKARVLAEAMSQATNSVTTAMMQRGNFKGPRKIIKCFNCGKEGHIAKNCRAPRKKGCWRCGKEGHQLKDCTERQANFLRENLAFPQGKAGELSPKQTRANSPTSRELRVWGRDNPLSKTGAERQGTVSFNFPQITLWQRPLVAIKIGGQLKEALLDTGADDTVLEEMNLPGKWKPKMIGGIGGFIKVRQYDQIPIEICGQKAIGTVLVGPTPVNIIGRNLLTQIGCTLNFPISPIETVPVKLKPGMDGPKVKQWPLTEEKIKALTEICTDMEKEGKISRIGPENPYNTPIFAIKKKDSTKWRKLVDFRELNKRTQDFWEVQLGIPHPAGLKKKKSVTVLDVGDAYFSVPLDEDFRKYTAFTISSINNETPGIRYQYNVLPQGWKGSPAIFQSSMTKILEPFRKQNPEMVIYQYMDDLYVGSDLEIGQHRTKIEKLREHLLRWGFTRPDKKHQKEPPFLWMGYELHPDKWTVQSIKLPEKESWTVNDIQNLVERLNWASQIYPGIKVRQLCKLLRGTKALTEVIPLTEEAELELAENREILKEPVHGVYYDPSKDLIAEIQKQGHGQWTYQIYQEPFKNLKTGKYARMRGAHTNDVKQLAEAVQRISTESIVIWGRTPKFRLPIQKETWETWWAEYWQATWIPEWEFVNTPPLVKLWYQLEKEPIIGAETFYVDGAANRETKLGKAGYVTDRGRQKVVPLTDTTNQKTELQAINLALQDSGLEVNIVTDSQYALGIIQAQPDKSESELVNQIIEQLIKKEKVYLAWVPAHKGIGGNEQVDKLVSQGIRKVLFLDGIDKAQEEHEKYHNNWRAMASDFNLPPVVAKEIVASCDKCQLKGEAMHGQVDCSPGIWQLDCTHLEGKVILVAVHVASGYIEAEVIPAETGQETAYFLLKLAGRWPVKVVHTDNGSNFTSAAVKAACWWAGIKQEFGIPYNPQSQGVVESMNKELKKIIGQVRDQAEHLKTAVQMAVFIHNFKRRRGIGGYSAGERIIDIIATDIQTKELQKQIIKIQNFRVYYRDSRDPIWKGPAKLLWKGEGAVVIQDKSDIKVVPRRKVKIIRDYGKQMAGDDCVASRQDED.

Gly-2 carries N-myristoyl glycine; by host lipidation. Residues 7-31 form an interaction with Gp41 region; that stretch reads VLSGGKLDKWEKIRLRPGGKKKYRL. Positions 8-43 are interaction with host CALM1; it reads LSGGKLDKWEKIRLRPGGKKKYRLKHIVWASRELER. Residues 12–19 form an interaction with host AP3D1 region; it reads KLDKWEKI. The interaction with membrane phosphatidylinositol 4,5-bisphosphate and RNA stretch occupies residues 14–33; it reads DKWEKIRLRPGGKKKYRLKH. A Nuclear export signal motif is present at residues 16–22; that stretch reads WEKIRLR. The Nuclear localization signal motif lies at 26–32; the sequence is KKKYRLK. The segment at 73–77 is interaction with membrane phosphatidylinositol 4,5-bisphosphate; it reads EELRS. The interval 102 to 128 is disordered; the sequence is EKMEEEQNKSKKKAQQAAADTGNNSQV. Position 132 is a phosphotyrosine; by host (Tyr-132). The interval 189–227 is interaction with human PPIA/CYPA and NUP153; sequence NTVGGHQAAMQMLKETINEEAAEWDRLHPVHAGPIAPGQ. The interval 277–363 is dimerization/Multimerization of capsid protein p24; it reads YSPVSILDIR…GGPSHKARVL (87 aa). 2 CCHC-type zinc fingers span residues 391 to 408 and 412 to 429; these read IKCF…NCRA and KGCW…DCTE. The tract at residues 489-493 is dimerization of protease; that stretch reads PQITL. One can recognise a Peptidase A2 domain in the interval 508 to 577; the sequence is KEALLDTGAD…TPVNIIGRNL (70 aa). Catalysis depends on Asp-513, which acts as the For protease activity; shared with dimeric partner. 2 dimerization of protease regions span residues 537–543 and 576–588; these read GIGGFIK and NLLT…LNFP. In terms of domain architecture, Reverse transcriptase spans 631-821; it reads EGKISRIGPE…PPFLWMGYEL (191 aa). Positions 697, 772, and 773 each coordinate Mg(2+). The segment at 814–822 is RT 'primer grip'; the sequence is FLWMGYELH. Positions 985-1001 match the Tryptophan repeat motif motif; it reads WETWWAEYWQATWIPEW. Residues 1021 to 1144 form the RNase H type-1 domain; that stretch reads IIGAETFYVD…VDKLVSQGIR (124 aa). Residues Asp-1030, Glu-1065, Asp-1085, and Asp-1136 each coordinate Mg(2+). The Integrase-type zinc-finger motif lies at 1150–1191; that stretch reads DGIDKAQEEHEKYHNNWRAMASDFNLPPVVAKEIVASCDKCQ. The Zn(2+) site is built by His-1159, His-1163, Cys-1187, and Cys-1190. In terms of domain architecture, Integrase catalytic spans 1201-1351; the sequence is VDCSPGIWQL…SAGERIIDII (151 aa). 3 residues coordinate Mg(2+): Asp-1211, Asp-1263, and Glu-1299. The segment at residues 1370–1417 is a DNA-binding region (integrase-type); that stretch reads FRVYYRDSRDPIWKGPAKLLWKGEGAVVIQDKSDIKVVPRRKVKIIRD.

As to quaternary structure, homotrimer; further assembles as hexamers of trimers. Interacts with gp41 (via C-terminus). Interacts with host CALM1; this interaction induces a conformational change in the Matrix protein, triggering exposure of the myristate group. Interacts with host AP3D1; this interaction allows the polyprotein trafficking to multivesicular bodies during virus assembly. Part of the pre-integration complex (PIC) which is composed of viral genome, matrix protein, Vpr and integrase. Homodimer; the homodimer further multimerizes as homohexamers or homopentamers. Interacts with human PPIA/CYPA; This interaction stabilizes the capsid. Interacts with human NUP153. Interacts with host PDZD8; this interaction stabilizes the capsid. Interacts with monkey TRIM5; this interaction destabilizes the capsid. In terms of assembly, homodimer, whose active site consists of two apposed aspartic acid residues. As to quaternary structure, heterodimer of p66 RT and p51 RT (RT p66/p51). Heterodimerization of RT is essential for DNA polymerase activity. The overall folding of the subdomains is similar in p66 RT and p51 RT but the spatial arrangements of the subdomains are dramatically different. Homotetramer; may further associate as a homohexadecamer. Part of the pre-integration complex (PIC) which is composed of viral genome, matrix protein, Vpr and integrase. Interacts with human SMARCB1/INI1 and human PSIP1/LEDGF isoform 1. Interacts with human KPNA3; this interaction might play a role in nuclear import of the pre-integration complex. Interacts with human NUP153; this interaction might play a role in nuclear import of the pre-integration complex. The cofactor is Mg(2+). In terms of processing, specific enzymatic cleavages by the viral protease yield mature proteins. The protease is released by autocatalytic cleavage. The polyprotein is cleaved during and after budding, this process is termed maturation. Proteolytic cleavage of p66 RT removes the RNase H domain to yield the p51 RT subunit. Nucleocapsid protein p7 might be further cleaved after virus entry. Post-translationally, tyrosine phosphorylated presumably in the virion by a host kinase. Phosphorylation is apparently not a major regulator of membrane association. Phosphorylated possibly by host MAPK1; this phosphorylation is necessary for Pin1-mediated virion uncoating. In terms of processing, methylated by host PRMT6, impairing its function by reducing RNA annealing and the initiation of reverse transcription.

Its subcellular location is the host cell membrane. The protein resides in the host endosome. It localises to the host multivesicular body. The protein localises to the virion membrane. It is found in the host nucleus. Its subcellular location is the host cytoplasm. The protein resides in the virion. The enzyme catalyses Specific for a P1 residue that is hydrophobic, and P1' variable, but often Pro.. It catalyses the reaction Endohydrolysis of RNA in RNA/DNA hybrids. Three different cleavage modes: 1. sequence-specific internal cleavage of RNA. Human immunodeficiency virus type 1 and Moloney murine leukemia virus enzymes prefer to cleave the RNA strand one nucleotide away from the RNA-DNA junction. 2. RNA 5'-end directed cleavage 13-19 nucleotides from the RNA end. 3. DNA 3'-end directed cleavage 15-20 nucleotides away from the primer terminus.. It carries out the reaction 3'-end directed exonucleolytic cleavage of viral RNA-DNA hybrid.. The catalysed reaction is DNA(n) + a 2'-deoxyribonucleoside 5'-triphosphate = DNA(n+1) + diphosphate. Its activity is regulated as follows. Protease: The viral protease is inhibited by many synthetic protease inhibitors (PIs), such as amprenavir, atazanavir, indinavir, loprinavir, nelfinavir, ritonavir and saquinavir. Use of protease inhibitors in tritherapy regimens permit more ambitious therapeutic strategies. Reverse transcriptase/ribonuclease H: RT can be inhibited either by nucleoside RT inhibitors (NRTIs) or by non nucleoside RT inhibitors (NNRTIs). NRTIs act as chain terminators, whereas NNRTIs inhibit DNA polymerization by binding a small hydrophobic pocket near the RT active site and inducing an allosteric change in this region. Classical NRTIs are abacavir, adefovir (PMEA), didanosine (ddI), lamivudine (3TC), stavudine (d4T), tenofovir (PMPA), zalcitabine (ddC), and zidovudine (AZT). Classical NNRTIs are atevirdine (BHAP U-87201E), delavirdine, efavirenz (DMP-266), emivirine (I-EBU), and nevirapine (BI-RG-587). The tritherapies used as a basic effective treatment of AIDS associate two NRTIs and one NNRTI. In terms of biological role, mediates, with Gag polyprotein, the essential events in virion assembly, including binding the plasma membrane, making the protein-protein interactions necessary to create spherical particles, recruiting the viral Env proteins, and packaging the genomic RNA via direct interactions with the RNA packaging sequence (Psi). Gag-Pol polyprotein may regulate its own translation, by the binding genomic RNA in the 5'-UTR. At low concentration, the polyprotein would promote translation, whereas at high concentration, the polyprotein would encapsidate genomic RNA and then shut off translation. Functionally, targets the polyprotein to the plasma membrane via a multipartite membrane-binding signal, that includes its myristoylated N-terminus. Matrix protein is part of the pre-integration complex. Implicated in the release from host cell mediated by Vpu. Binds to RNA. Forms the conical core that encapsulates the genomic RNA-nucleocapsid complex in the virion. Most core are conical, with only 7% tubular. The core is constituted by capsid protein hexamer subunits. The core is disassembled soon after virion entry. Host restriction factors such as TRIM5-alpha or TRIMCyp bind retroviral capsids and cause premature capsid disassembly, leading to blocks in reverse transcription. Capsid restriction by TRIM5 is one of the factors which restricts HIV-1 to the human species. Host PIN1 apparently facilitates the virion uncoating. On the other hand, interactions with PDZD8 or CYPA stabilize the capsid. Its function is as follows. Encapsulates and protects viral dimeric unspliced genomic RNA (gRNA). Binds these RNAs through its zinc fingers. Acts as a nucleic acid chaperone which is involved in rearangement of nucleic acid secondary structure during gRNA retrotranscription. Also facilitates template switch leading to recombination. As part of the polyprotein, participates in gRNA dimerization, packaging, tRNA incorporation and virion assembly. In terms of biological role, aspartyl protease that mediates proteolytic cleavages of Gag and Gag-Pol polyproteins during or shortly after the release of the virion from the plasma membrane. Cleavages take place as an ordered, step-wise cascade to yield mature proteins. This process is called maturation. Displays maximal activity during the budding process just prior to particle release from the cell. Also cleaves Nef and Vif, probably concomitantly with viral structural proteins on maturation of virus particles. Hydrolyzes host EIF4GI and PABP1 in order to shut off the capped cellular mRNA translation. The resulting inhibition of cellular protein synthesis serves to ensure maximal viral gene expression and to evade host immune response. Also mediates cleavage of host YTHDF3. Mediates cleavage of host CARD8, thereby activating the CARD8 inflammasome, leading to the clearance of latent HIV-1 in patient CD4(+) T-cells after viral reactivation; in contrast, HIV-1 can evade CARD8-sensing when its protease remains inactive in infected cells prior to viral budding. Functionally, multifunctional enzyme that converts the viral RNA genome into dsDNA in the cytoplasm, shortly after virus entry into the cell. This enzyme displays a DNA polymerase activity that can copy either DNA or RNA templates, and a ribonuclease H (RNase H) activity that cleaves the RNA strand of RNA-DNA heteroduplexes in a partially processive 3' to 5' endonucleasic mode. Conversion of viral genomic RNA into dsDNA requires many steps. A tRNA(3)-Lys binds to the primer-binding site (PBS) situated at the 5'-end of the viral RNA. RT uses the 3' end of the tRNA primer to perform a short round of RNA-dependent minus-strand DNA synthesis. The reading proceeds through the U5 region and ends after the repeated (R) region which is present at both ends of viral RNA. The portion of the RNA-DNA heteroduplex is digested by the RNase H, resulting in a ssDNA product attached to the tRNA primer. This ssDNA/tRNA hybridizes with the identical R region situated at the 3' end of viral RNA. This template exchange, known as minus-strand DNA strong stop transfer, can be either intra- or intermolecular. RT uses the 3' end of this newly synthesized short ssDNA to perform the RNA-dependent minus-strand DNA synthesis of the whole template. RNase H digests the RNA template except for two polypurine tracts (PPTs) situated at the 5'-end and near the center of the genome. It is not clear if both polymerase and RNase H activities are simultaneous. RNase H probably can proceed both in a polymerase-dependent (RNA cut into small fragments by the same RT performing DNA synthesis) and a polymerase-independent mode (cleavage of remaining RNA fragments by free RTs). Secondly, RT performs DNA-directed plus-strand DNA synthesis using the PPTs that have not been removed by RNase H as primers. PPTs and tRNA primers are then removed by RNase H. The 3' and 5' ssDNA PBS regions hybridize to form a circular dsDNA intermediate. Strand displacement synthesis by RT to the PBS and PPT ends produces a blunt ended, linear dsDNA copy of the viral genome that includes long terminal repeats (LTRs) at both ends. Catalyzes viral DNA integration into the host chromosome, by performing a series of DNA cutting and joining reactions. This enzyme activity takes place after virion entry into a cell and reverse transcription of the RNA genome in dsDNA. The first step in the integration process is 3' processing. This step requires a complex comprising the viral genome, matrix protein, Vpr and integrase. This complex is called the pre-integration complex (PIC). The integrase protein removes 2 nucleotides from each 3' end of the viral DNA, leaving recessed CA OH's at the 3' ends. In the second step, the PIC enters cell nucleus. This process is mediated through integrase and Vpr proteins, and allows the virus to infect a non dividing cell. This ability to enter the nucleus is specific of lentiviruses, other retroviruses cannot and rely on cell division to access cell chromosomes. In the third step, termed strand transfer, the integrase protein joins the previously processed 3' ends to the 5' ends of strands of target cellular DNA at the site of integration. The 5'-ends are produced by integrase-catalyzed staggered cuts, 5 bp apart. A Y-shaped, gapped, recombination intermediate results, with the 5'-ends of the viral DNA strands and the 3' ends of target DNA strands remaining unjoined, flanking a gap of 5 bp. The last step is viral DNA integration into host chromosome. This involves host DNA repair synthesis in which the 5 bp gaps between the unjoined strands are filled in and then ligated. Since this process occurs at both cuts flanking the HIV genome, a 5 bp duplication of host DNA is produced at the ends of HIV-1 integration. Alternatively, Integrase may catalyze the excision of viral DNA just after strand transfer, this is termed disintegration. The polypeptide is Gag-Pol polyprotein (gag-pol) (Human immunodeficiency virus type 1 group M subtype D (isolate ELI) (HIV-1)).